The primary structure comprises 243 residues: DNA repair protein RecO (243 aa).

It belongs to the RecO family.

Its function is as follows. Involved in DNA repair and RecF pathway recombination. The polypeptide is DNA repair protein RecO (Frankia casuarinae (strain DSM 45818 / CECT 9043 / HFP020203 / CcI3)).